Consider the following 329-residue polypeptide: U5 small nuclear ribonucleoprotein TSSC4 (329 aa).

2 disordered regions span residues 1 to 88 (MAEA…MSST) and 104 to 156 (ARRA…PDYV). Over residues 22–41 (DTLPSDTVSLSDSDSDLSLP) the composition is skewed to low complexity. A phosphoserine mark is found at S60, S67, S86, S132, S143, and S146. The hom2; mediates interaction with the U5 snRNP complexes and required for spliceosomal tri-snRNP complex assembly stretch occupies residues 77–104 (VQPFHLRGMSSTFSQRSRDIFDCLEGAA). The tract at residues 149–316 (VPPVPDYVAH…SRKRSRDHFR (168 aa)) is interaction with SNRNP200. Residues 150 to 186 (PPVPDYVAHPERWTKYSLEDVTEVSEQSNQATALAFL) are hom3; mediates interaction with the U5 snRNP complexes. The tract at residues 201–250 (FNQDPSSCGEGRVIFTKPVRGVEARHERKRVLGKVGEPGRGGLGNPATDR) is hom4; necessary for interaction with the PRPF19 complex and required for spliceosomal tri-snRNP complex assembly. At K217 the chain carries N6-acetyllysine. Residues 221-329 (GVEARHERKR…SSPEDPGAEV (109 aa)) are disordered. S265 carries the post-translational modification Phosphoserine. The segment covering 306–317 (GSRKRSRDHFRN) has biased composition (basic residues). S321 is modified (phosphoserine).

Belongs to the TSSC4 family. As to quaternary structure, interacts in a RNA-independent manner with distinct U5 snRNP-containing complexes, the mono-U5 snRNP and the post-splicing U5 snRNP-PRPF19 complex. Interacts with SNRNP200; the interaction is direct, excludes recruitment of C9ORF78 and WBP4 to SNRNP200 and negatively regulates its RNA helicase activity. Interacts with PRPF8; the interaction is direct. Expressed in fetal brain, lung, liver and kidney. Widely expressed in adult tissues.

The protein localises to the nucleus. Its subcellular location is the cytoplasm. In terms of biological role, protein associated with the U5 snRNP, during its maturation and its post-splicing recycling and which is required for spliceosomal tri-snRNP complex assembly in the nucleus. Has a molecular sequestering activity and transiently hinders SNRNP200 binding sites for constitutive splicing factors that intervene later during the assembly of the spliceosome and splicing. Together with its molecular sequestering activity, may also function as a molecular adapter and placeholder, coordinating the assembly of the U5 snRNP and its association with the U4/U6 di-snRNP. The protein is U5 small nuclear ribonucleoprotein TSSC4 of Homo sapiens (Human).